The following is a 264-amino-acid chain: Vacuolar protein sorting-associated protein 75 (264 aa).

Serine 3 is modified (phosphoserine). Positions 223–264 are disordered; the sequence is LEDEEGESGLSADGDSEDDDGSLGEVDLPLSDEEPSSKKRKV.

Belongs to the nucleosome assembly protein (NAP) family. In terms of assembly, homodimer. Homotetramer. Forms a complex with RTT109; consisting of a VPS75 dimer contacted by two RTT109 subunits. Interacts with RTT109; the interaction is direct. Interacts with ASF1. Interacts with histone H3/H4 heterodimers and heterotetramers via histone H3.

It is found in the nucleus. Histone chaperone which acts as a cofactor stimulating histone H3 acetylation by RTT109. Preferentially stimulates histone H3 'Lys-9' acetylation by RTT109. May also stimulate histone H3 'Lys-56' acetylation by RTT109. Assembles nucleosomes (in vitro). In Saccharomyces cerevisiae (strain ATCC 204508 / S288c) (Baker's yeast), this protein is Vacuolar protein sorting-associated protein 75 (VPS75).